A 386-amino-acid chain; its full sequence is Phosphoglycerate kinase (386 aa).

Substrate is bound by residues 21–23 (DLN), Arg36, 59–62 (HLGR), Arg112, and Arg145. ATP-binding positions include Lys196, Glu313, and 339 to 342 (GGDT).

Belongs to the phosphoglycerate kinase family. Monomer.

The protein resides in the cytoplasm. It carries out the reaction (2R)-3-phosphoglycerate + ATP = (2R)-3-phospho-glyceroyl phosphate + ADP. The protein operates within carbohydrate degradation; glycolysis; pyruvate from D-glyceraldehyde 3-phosphate: step 2/5. The chain is Phosphoglycerate kinase (pgk) from Haemophilus influenzae (strain ATCC 51907 / DSM 11121 / KW20 / Rd).